A 750-amino-acid polypeptide reads, in one-letter code: MIIRSPEPDVKILVDRDPIKTSFEEWARPGHFSRTIAKGPDTTTWIWNLHADAHDFDSQTSDLEEISRKVFSAHFGQLSIIFLWLSGMYFHGARFSNYEAWLSDPTHIGPSAQVVWPIVGQEILNGDVGGGFRGIQITSGFFQIWRASGITNELQLYCTAIGALVFAALMLFAGWFHYHKAAPKLAWFQDVESMLNHHLAGLLGLGSLSWAGHQVHVSLPINQFLNAGVDPKEIPLPHEFILNRDLLAQLYPSFAEGATPFFTLNWSKYAEFLTFRGGLDPVTGGLWLTDIAHHHLAIAILFLVAGHMYRTNWGIGHGIKDILEAHKGPFTGQGHKGLYEILTTSWHAQLSLNLAMLGSLTIVVAHHMYSMPPYPYLATDYGTQLSLFTHHMWIGGFLIVGAAAHAAIFMVRDYDPTTRYNDLLDRVLRHRDAIISHLNWVCIFLGFHSFGLYIHNDTMSALGRPQDMFSDTAIQLQPVFAQWIQNTHALAPGATAPGATTSTSLTWGGGDLVAVGGKVALLPIPLGTADFLVHHIHAFTIHVTVLILLKGVLFARSSRLIPDKANLGFRFPCDGPGRGGTCQVSAWDHVFLGLFWMYNSISVVIFHFSWKMQSDVWGSISDQGVVTHITGGNFAQSSTTINGWLRDFLWAQASQVIQSYGSSLSAYGLFFLGAHFVWAFSLMFLFSGRGYWQELIESIVWAHNKLKVAPATQPRALSIVQGRAVGVTHYLLGGIATTWAFFLARIIAVG.

The next 8 helical transmembrane spans lie at 70–93 (VFSAHFGQLSIIFLWLSGMYFHGA), 156–179 (LYCTAIGALVFAALMLFAGWFHYH), 195–219 (LNHHLAGLLGLGSLSWAGHQVHVSL), 291–309 (IAHHHLAIAILFLVAGHMY), 346–369 (WHAQLSLNLAMLGSLTIVVAHHMY), 385–411 (LSLFTHHMWIGGFLIVGAAAHAAIFMV), 433–455 (AIISHLNWVCIFLGFHSFGLYIH), and 531–549 (FLVHHIHAFTIHVTVLILL). [4Fe-4S] cluster contacts are provided by cysteine 573 and cysteine 582. 2 helical membrane-spanning segments follow: residues 589–610 (HVFLGLFWMYNSISVVIFHFSW) and 664–686 (LSAYGLFFLGAHFVWAFSLMFLF). Histidine 675 is a chlorophyll a' binding site. Positions 683 and 691 each coordinate chlorophyll a. Position 692 (tryptophan 692) interacts with phylloquinone. Residues 724 to 744 (AVGVTHYLLGGIATTWAFFLA) form a helical membrane-spanning segment.

Belongs to the PsaA/PsaB family. In terms of assembly, the PsaA/B heterodimer binds the P700 chlorophyll special pair and subsequent electron acceptors. PSI consists of a core antenna complex that captures photons, and an electron transfer chain that converts photonic excitation into a charge separation. The eukaryotic PSI reaction center is composed of at least 11 subunits. Requires P700 is a chlorophyll a/chlorophyll a' dimer, A0 is one or more chlorophyll a, A1 is one or both phylloquinones and FX is a shared 4Fe-4S iron-sulfur center. as cofactor.

It localises to the plastid. The protein resides in the chloroplast thylakoid membrane. It catalyses the reaction reduced [plastocyanin] + hnu + oxidized [2Fe-2S]-[ferredoxin] = oxidized [plastocyanin] + reduced [2Fe-2S]-[ferredoxin]. In terms of biological role, psaA and PsaB bind P700, the primary electron donor of photosystem I (PSI), as well as the electron acceptors A0, A1 and FX. PSI is a plastocyanin-ferredoxin oxidoreductase, converting photonic excitation into a charge separation, which transfers an electron from the donor P700 chlorophyll pair to the spectroscopically characterized acceptors A0, A1, FX, FA and FB in turn. Oxidized P700 is reduced on the lumenal side of the thylakoid membrane by plastocyanin. This Morus indica (Mulberry) protein is Photosystem I P700 chlorophyll a apoprotein A1.